We begin with the raw amino-acid sequence, 273 residues long: Dermonecrotic toxin LdSicTox-alphaIB3avi (273 aa).

The active site involves His5. Mg(2+) contacts are provided by Glu25 and Asp27. His41 acts as the Nucleophile in catalysis. 2 cysteine pairs are disulfide-bonded: Cys45/Cys51 and Cys47/Cys190. Asp85 is a binding site for Mg(2+).

This sequence belongs to the arthropod phospholipase D family. Class II subfamily. Mg(2+) is required as a cofactor. Expressed by the venom gland.

It is found in the secreted. The enzyme catalyses an N-(acyl)-sphingosylphosphocholine = an N-(acyl)-sphingosyl-1,3-cyclic phosphate + choline. It catalyses the reaction an N-(acyl)-sphingosylphosphoethanolamine = an N-(acyl)-sphingosyl-1,3-cyclic phosphate + ethanolamine. It carries out the reaction a 1-acyl-sn-glycero-3-phosphocholine = a 1-acyl-sn-glycero-2,3-cyclic phosphate + choline. The catalysed reaction is a 1-acyl-sn-glycero-3-phosphoethanolamine = a 1-acyl-sn-glycero-2,3-cyclic phosphate + ethanolamine. Its function is as follows. Dermonecrotic toxins cleave the phosphodiester linkage between the phosphate and headgroup of certain phospholipids (sphingolipid and lysolipid substrates), forming an alcohol (often choline) and a cyclic phosphate. This toxin acts on sphingomyelin (SM). It may also act on ceramide phosphoethanolamine (CPE), lysophosphatidylcholine (LPC) and lysophosphatidylethanolamine (LPE), but not on lysophosphatidylserine (LPS), and lysophosphatidylglycerol (LPG). It acts by transphosphatidylation, releasing exclusively cyclic phosphate products as second products. Induces dermonecrosis, hemolysis, increased vascular permeability, edema, inflammatory response, and platelet aggregation. The protein is Dermonecrotic toxin LdSicTox-alphaIB3avi of Loxosceles deserta (Desert recluse spider).